Here is a 404-residue protein sequence, read N- to C-terminus: Putative aspartate aminotransferase, cytoplasmic 2 (404 aa).

At Lys-249 the chain carries N6-(pyridoxal phosphate)lysine.

This sequence belongs to the class-I pyridoxal-phosphate-dependent aminotransferase family. Homodimer. It depends on pyridoxal 5'-phosphate as a cofactor.

The protein resides in the cytoplasm. The catalysed reaction is L-aspartate + 2-oxoglutarate = oxaloacetate + L-glutamate. In Mus musculus (Mouse), this protein is Putative aspartate aminotransferase, cytoplasmic 2 (Got1l1).